The sequence spans 218 residues: Large ribosomal subunit protein uL3 (218 aa).

The protein belongs to the universal ribosomal protein uL3 family. Part of the 50S ribosomal subunit. Forms a cluster with proteins L14 and L19.

One of the primary rRNA binding proteins, it binds directly near the 3'-end of the 23S rRNA, where it nucleates assembly of the 50S subunit. This chain is Large ribosomal subunit protein uL3, found in Corynebacterium urealyticum (strain ATCC 43042 / DSM 7109).